A 677-amino-acid chain; its full sequence is Methionine--tRNA ligase (677 aa).

The 'HIGH' region motif lies at 15–25; the sequence is PYANGSIHLGH. Residues C146, C149, C159, and C162 each coordinate Zn(2+). A 'KMSKS' region motif is present at residues 333 to 337; that stretch reads KMSKS. Residue K336 participates in ATP binding. The tRNA-binding domain occupies 575–677; it reads DFAKVDLRVA…AGAKPGHQVK (103 aa).

The protein belongs to the class-I aminoacyl-tRNA synthetase family. MetG type 1 subfamily. As to quaternary structure, homodimer. Zn(2+) is required as a cofactor.

It localises to the cytoplasm. The enzyme catalyses tRNA(Met) + L-methionine + ATP = L-methionyl-tRNA(Met) + AMP + diphosphate. In terms of biological role, is required not only for elongation of protein synthesis but also for the initiation of all mRNA translation through initiator tRNA(fMet) aminoacylation. The polypeptide is Methionine--tRNA ligase (Shigella flexneri serotype 5b (strain 8401)).